We begin with the raw amino-acid sequence, 60 residues long: Chromatin protein Cren7 (60 aa).

The protein belongs to the Cren7 family. In terms of assembly, monomer. In terms of processing, methylated at multiple sites, to varying extents.

The protein resides in the chromosome. The protein localises to the cytoplasm. Its function is as follows. A chromatin protein, binds double-stranded DNA without sequence specificity. Constrains negative DNA supercoils. In Saccharolobus islandicus (strain M.16.4 / Kamchatka #3) (Sulfolobus islandicus), this protein is Chromatin protein Cren7.